Reading from the N-terminus, the 56-residue chain is Large ribosomal subunit protein bL33 (56 aa).

This sequence belongs to the bacterial ribosomal protein bL33 family.

The protein is Large ribosomal subunit protein bL33 of Aliarcobacter butzleri (strain RM4018) (Arcobacter butzleri).